The following is a 316-amino-acid chain: 4-hydroxy-3-methylbut-2-enyl diphosphate reductase (316 aa).

C12 lines the [4Fe-4S] cluster pocket. Residues H41 and H74 each contribute to the (2E)-4-hydroxy-3-methylbut-2-enyl diphosphate site. 2 residues coordinate dimethylallyl diphosphate: H41 and H74. Residues H41 and H74 each contribute to the isopentenyl diphosphate site. C96 provides a ligand contact to [4Fe-4S] cluster. (2E)-4-hydroxy-3-methylbut-2-enyl diphosphate is bound at residue H124. Dimethylallyl diphosphate is bound at residue H124. Residue H124 participates in isopentenyl diphosphate binding. E126 acts as the Proton donor in catalysis. T169 contributes to the (2E)-4-hydroxy-3-methylbut-2-enyl diphosphate binding site. C199 is a [4Fe-4S] cluster binding site. 4 residues coordinate (2E)-4-hydroxy-3-methylbut-2-enyl diphosphate: S227, S228, N229, and S271. Dimethylallyl diphosphate is bound by residues S227, S228, N229, and S271. Isopentenyl diphosphate-binding residues include S227, S228, N229, and S271.

It belongs to the IspH family. The cofactor is [4Fe-4S] cluster.

It catalyses the reaction isopentenyl diphosphate + 2 oxidized [2Fe-2S]-[ferredoxin] + H2O = (2E)-4-hydroxy-3-methylbut-2-enyl diphosphate + 2 reduced [2Fe-2S]-[ferredoxin] + 2 H(+). The enzyme catalyses dimethylallyl diphosphate + 2 oxidized [2Fe-2S]-[ferredoxin] + H2O = (2E)-4-hydroxy-3-methylbut-2-enyl diphosphate + 2 reduced [2Fe-2S]-[ferredoxin] + 2 H(+). It participates in isoprenoid biosynthesis; dimethylallyl diphosphate biosynthesis; dimethylallyl diphosphate from (2E)-4-hydroxy-3-methylbutenyl diphosphate: step 1/1. Its pathway is isoprenoid biosynthesis; isopentenyl diphosphate biosynthesis via DXP pathway; isopentenyl diphosphate from 1-deoxy-D-xylulose 5-phosphate: step 6/6. Catalyzes the conversion of 1-hydroxy-2-methyl-2-(E)-butenyl 4-diphosphate (HMBPP) into a mixture of isopentenyl diphosphate (IPP) and dimethylallyl diphosphate (DMAPP). Acts in the terminal step of the DOXP/MEP pathway for isoprenoid precursor biosynthesis. In Xanthomonas axonopodis pv. citri (strain 306), this protein is 4-hydroxy-3-methylbut-2-enyl diphosphate reductase.